Reading from the N-terminus, the 428-residue chain is Cytochrome c biogenesis protein CcsB (428 aa).

3 consecutive transmembrane segments (helical) span residues 14 to 34, 72 to 92, and 162 to 182; these read LKFA…GTFI, SLWF…CSFR, and IGPL…AYGS.

Belongs to the Ccs1/CcsB family. May interact with CcsA.

The protein localises to the cellular thylakoid membrane. Its function is as follows. Required during biogenesis of c-type cytochromes (cytochrome c6 and cytochrome f) at the step of heme attachment. The protein is Cytochrome c biogenesis protein CcsB of Prochlorococcus marinus (strain MIT 9301).